The chain runs to 273 residues: Large ribosomal subunit protein uL2 (273 aa).

The disordered stretch occupies residues 228 to 273 (VDHPHGGGEGKTSGGRHPVTPWGFPTKGKKTRKNKRTSKFIVKKRK). A compositionally biased stretch (basic residues) spans 254–273 (KGKKTRKNKRTSKFIVKKRK).

Belongs to the universal ribosomal protein uL2 family. In terms of assembly, part of the 50S ribosomal subunit. Forms a bridge to the 30S subunit in the 70S ribosome.

One of the primary rRNA binding proteins. Required for association of the 30S and 50S subunits to form the 70S ribosome, for tRNA binding and peptide bond formation. It has been suggested to have peptidyltransferase activity; this is somewhat controversial. Makes several contacts with the 16S rRNA in the 70S ribosome. This chain is Large ribosomal subunit protein uL2, found in Rickettsia massiliae (strain Mtu5).